We begin with the raw amino-acid sequence, 372 residues long: Cobalt-precorrin-5B C(1)-methyltransferase (372 aa).

The protein belongs to the CbiD family.

It carries out the reaction Co-precorrin-5B + S-adenosyl-L-methionine = Co-precorrin-6A + S-adenosyl-L-homocysteine. Its pathway is cofactor biosynthesis; adenosylcobalamin biosynthesis; cob(II)yrinate a,c-diamide from sirohydrochlorin (anaerobic route): step 6/10. Its function is as follows. Catalyzes the methylation of C-1 in cobalt-precorrin-5B to form cobalt-precorrin-6A. The polypeptide is Cobalt-precorrin-5B C(1)-methyltransferase (Prochlorococcus marinus (strain MIT 9515)).